The following is a 417-amino-acid chain: Imidazolonepropionase (417 aa).

Fe(3+) is bound by residues H77 and H79. The Zn(2+) site is built by H77 and H79. 3 residues coordinate 4-imidazolone-5-propanoate: R86, Y149, and H182. Residue Y149 participates in N-formimidoyl-L-glutamate binding. H247 serves as a coordination point for Fe(3+). H247 is a Zn(2+) binding site. A 4-imidazolone-5-propanoate-binding site is contributed by Q250. D322 lines the Fe(3+) pocket. Position 322 (D322) interacts with Zn(2+). N-formimidoyl-L-glutamate contacts are provided by N324 and G326. T327 lines the 4-imidazolone-5-propanoate pocket.

It belongs to the metallo-dependent hydrolases superfamily. HutI family. Zn(2+) serves as cofactor. Fe(3+) is required as a cofactor.

Its subcellular location is the cytoplasm. The catalysed reaction is 4-imidazolone-5-propanoate + H2O = N-formimidoyl-L-glutamate. It participates in amino-acid degradation; L-histidine degradation into L-glutamate; N-formimidoyl-L-glutamate from L-histidine: step 3/3. Functionally, catalyzes the hydrolytic cleavage of the carbon-nitrogen bond in imidazolone-5-propanoate to yield N-formimidoyl-L-glutamate. It is the third step in the universal histidine degradation pathway. This is Imidazolonepropionase from Cupriavidus taiwanensis (strain DSM 17343 / BCRC 17206 / CCUG 44338 / CIP 107171 / LMG 19424 / R1) (Ralstonia taiwanensis (strain LMG 19424)).